The primary structure comprises 182 residues: tRNA-splicing endonuclease (182 aa).

Residues Y119, H127, and K158 contribute to the active site.

Belongs to the tRNA-intron endonuclease family. Archaeal short subfamily. In terms of assembly, homotetramer; although the tetramer contains four active sites, only two participate in the cleavage. Therefore, it should be considered as a dimer of dimers.

It catalyses the reaction pretRNA = a 3'-half-tRNA molecule with a 5'-OH end + a 5'-half-tRNA molecule with a 2',3'-cyclic phosphate end + an intron with a 2',3'-cyclic phosphate and a 5'-hydroxyl terminus.. In terms of biological role, endonuclease that removes tRNA introns. Cleaves pre-tRNA at the 5'- and 3'-splice sites to release the intron. The products are an intron and two tRNA half-molecules bearing 2',3' cyclic phosphate and 5'-OH termini. Recognizes a pseudosymmetric substrate in which 2 bulged loops of 3 bases are separated by a stem of 4 bp. The sequence is that of tRNA-splicing endonuclease from Saccharolobus islandicus (strain L.S.2.15 / Lassen #1) (Sulfolobus islandicus).